Here is a 301-residue protein sequence, read N- to C-terminus: Pyridoxal 5'-phosphate synthase subunit Pdx1 (301 aa).

Aspartate 26 is a D-ribose 5-phosphate binding site. Lysine 83 serves as the catalytic Schiff-base intermediate with D-ribose 5-phosphate. Glycine 155 is a binding site for D-ribose 5-phosphate. Residue arginine 167 participates in D-glyceraldehyde 3-phosphate binding. D-ribose 5-phosphate is bound by residues glycine 216 and 237-238 (GS).

Belongs to the PdxS/SNZ family. As to quaternary structure, homohexamer and homododecamer. In the presence of Pdx2, forms a dodecamer of heterodimers.

Its subcellular location is the cytoplasm. It carries out the reaction aldehydo-D-ribose 5-phosphate + D-glyceraldehyde 3-phosphate + L-glutamine = pyridoxal 5'-phosphate + L-glutamate + phosphate + 3 H2O + H(+). It participates in cofactor biosynthesis; pyridoxal 5'-phosphate biosynthesis. Its function is as follows. Catalyzes the formation of pyridoxal 5'-phosphate from ribose 5-phosphate (RBP), glyceraldehyde 3-phosphate (G3P) and ammonia. The ammonia is provided by Pdx2. Can also use ribulose 5-phosphate and dihydroxyacetone phosphate as substrates, resulting from enzyme-catalyzed isomerization of RBP and G3P, respectively. This chain is Pyridoxal 5'-phosphate synthase subunit Pdx1 (pdx1), found in Plasmodium falciparum (isolate 3D7).